We begin with the raw amino-acid sequence, 529 residues long: MDQDRSDNTALRRGLRIALRGRRDPLPVAGRRSRTSGGIDDLHTRKVLDLTIRLAEVMLSSGSGTADVVATAQDVAQAYQLTDCVVDITVTTIIVSALATTDTPPVTIMRSVRTRSTDYSRLAELDRLVQRITSGGVAVDQAHEAMDELTERPHPYPRWLATAGAAGFALGVAMLLGGTWLTCVLAAVTSGVIDRLGRLLNRIGTPLFFQRVFGAGIATLVAVAAYLIAGQDPTALVATGIVVLLSGMTLVGSMQDAVTGYMLTALARLGDALFLTAGIVVGILISLRGVTNAGIQIELHVDATTTLATPGMPLPILVAVSGAALSGVCLTIASYAPLRSVATAGLSAGLAELVLIGLGAAGFGRVVATWTAAIGVGFLATLISIRRQAPALVTATAGIMPMLPGLAVFRAVFAFAVNDTPDGGLTQLLEAAATALALGSGVVLGEFLASPLRYGAGRIGDLFRIEGPPGLRRAVGRVVRLQPAKSQQPTGTGGQRWRSVALEPTTADDVDAGYRGDWPATCTSATEVR.

A run of 10 helical transmembrane segments spans residues 88 to 108, 168 to 188, 212 to 232, 234 to 254, 265 to 285, 312 to 332, 344 to 364, 365 to 385, 389 to 409, and 428 to 448; these read ITVTTIIVSALATTDTPPVTI, FALGVAMLLGGTWLTCVLAAV, VFGAGIATLVAVAAYLIAGQD, TALVATGIVVLLSGMTLVGSM, ALARLGDALFLTAGIVVGILI, MPLPILVAVSGAALSGVCLTI, AGLSAGLAELVLIGLGAAGFG, RVVATWTAAIGVGFLATLISI, APALVTATAGIMPMLPGLAVF, and LLEAAATALALGSGVVLGEFL. The tract at residues 482-501 is disordered; it reads QPAKSQQPTGTGGQRWRSVA.

It belongs to the ThrE exporter (TC 2.A.79) family.

Its subcellular location is the cell membrane. The enzyme catalyses L-threonine(in) + H(+)(out) = L-threonine(out) + H(+)(in). Functionally, catalyzes the export of L-threonine and L-serine from the cell to the extracellular environment. Export is dependent on the proton motive force. Required for in vitro growth and survival of bacteria inside macrophages. Increased expression is associated with low-level amikacin (AMK) resistance. The chain is Probable threonine/serine exporter from Mycobacterium tuberculosis (strain ATCC 25618 / H37Rv).